The sequence spans 350 residues: Geranylgeranyl pyrophosphate synthase (350 aa).

Residues K66, R69, and H98 each contribute to the isopentenyl diphosphate site. 2 residues coordinate Mg(2+): D105 and D109. Dimethylallyl diphosphate is bound at residue R114. Position 115 (R115) interacts with isopentenyl diphosphate. The dimethylallyl diphosphate site is built by K200, T201, Q236, N243, and K263.

This sequence belongs to the FPP/GGPP synthase family. The cofactor is Mg(2+).

The catalysed reaction is isopentenyl diphosphate + dimethylallyl diphosphate = (2E)-geranyl diphosphate + diphosphate. It catalyses the reaction isopentenyl diphosphate + (2E)-geranyl diphosphate = (2E,6E)-farnesyl diphosphate + diphosphate. It carries out the reaction isopentenyl diphosphate + (2E,6E)-farnesyl diphosphate = (2E,6E,10E)-geranylgeranyl diphosphate + diphosphate. It functions in the pathway secondary metabolite biosynthesis; terpenoid biosynthesis. Geranylgeranyl pyrophosphate synthase; part of the gene cluster that mediates the biosynthesis of pleuromutilin, a tricyclic diterpene showing antibacterial properties. The geranylgeranyl diphosphate (GGPP) synthase ple4 catalyzes the first step in pleuromutilin biosynthesis. GGPP is then substrate of the premutilin synthase (PS) ple3 to yield premutilin. Premutilin synthase is a bifunctional enzyme composed of the fusion of a class II diterpene cyclase (DTC) and a class I diterpene synthase (DTS), with the corresponding domains and active sites containing characteristic aspartate-rich motifs. GGPP is first converted to mutildienyl-diphosphate (MPP) at the class II DTC site. MPP is subsequently further cyclized at the class I DTS site, followed by a 1,5-hydride shift and addition of water prior to terminating deprotonation, to yield premutilin. The cytochrome P450 monooxygenases ple5 and ple6 hydroxylate premutilin at C-11 and C-3, respectively, producing 11-hydroxypremutilin and 3-hydroxypremutilin. The combination of the actions of both ple5 and ple6 leads to the production of 3,11-dihydroxypremutilin. The short chain dehydrogenase ple7 further converts 3,11-dihydroxypremutilin into mutilin. The acetyltransferase ple2 then acetylates mutilin to produce 14-O-acetylmutilin. Finally, the cytochrome P450 monooxygenase ple1 catalyzes hydroxylation on the alpha position of the acetyl side chain of 14-O-acetylmutilin to yield pleuromutilin. The chain is Geranylgeranyl pyrophosphate synthase from Rhodocybe pseudopiperita (Clitopilus pseudopiperitus).